The primary structure comprises 157 residues: 2-C-methyl-D-erythritol 2,4-cyclodiphosphate synthase (157 aa).

Asp-8 and His-10 together coordinate a divalent metal cation. 4-CDP-2-C-methyl-D-erythritol 2-phosphate is bound by residues 8–10 (DIH) and 34–35 (HS). Position 42 (His-42) interacts with a divalent metal cation. 4-CDP-2-C-methyl-D-erythritol 2-phosphate contacts are provided by residues 56–58 (DIG), 61–65 (FPDTD), 132–135 (TTNE), and Arg-142.

The protein belongs to the IspF family. In terms of assembly, homotrimer. It depends on a divalent metal cation as a cofactor.

The enzyme catalyses 4-CDP-2-C-methyl-D-erythritol 2-phosphate = 2-C-methyl-D-erythritol 2,4-cyclic diphosphate + CMP. It participates in isoprenoid biosynthesis; isopentenyl diphosphate biosynthesis via DXP pathway; isopentenyl diphosphate from 1-deoxy-D-xylulose 5-phosphate: step 4/6. In terms of biological role, involved in the biosynthesis of isopentenyl diphosphate (IPP) and dimethylallyl diphosphate (DMAPP), two major building blocks of isoprenoid compounds. Catalyzes the conversion of 4-diphosphocytidyl-2-C-methyl-D-erythritol 2-phosphate (CDP-ME2P) to 2-C-methyl-D-erythritol 2,4-cyclodiphosphate (ME-CPP) with a corresponding release of cytidine 5-monophosphate (CMP). The protein is 2-C-methyl-D-erythritol 2,4-cyclodiphosphate synthase of Chloroherpeton thalassium (strain ATCC 35110 / GB-78).